A 386-amino-acid polypeptide reads, in one-letter code: Cytochrome b (386 aa).

Transmembrane regions (helical) follow at residues 32–52 (FGSL…TLAM), 76–98 (WLIR…LHVG), 113–133 (TWII…LGYV), and 179–199 (FFAL…MHLI). Residues His82 and His96 each contribute to the heme b site. Positions 183 and 197 each coordinate heme b. His202 provides a ligand contact to a ubiquinone. The next 4 helical transmembrane spans lie at 226 to 246 (YIFK…LFVF), 290 to 310 (LLGV…PITD), 322 to 342 (LSKV…QLGA), and 349 to 369 (FIEF…VIMP).

This sequence belongs to the cytochrome b family. In terms of assembly, fungal cytochrome b-c1 complex contains 10 subunits; 3 respiratory subunits, 2 core proteins and 5 low-molecular weight proteins. Cytochrome b-c1 complex is a homodimer. Heme b is required as a cofactor.

Its subcellular location is the mitochondrion inner membrane. Functionally, component of the ubiquinol-cytochrome c reductase complex (complex III or cytochrome b-c1 complex) that is part of the mitochondrial respiratory chain. The b-c1 complex mediates electron transfer from ubiquinol to cytochrome c. Contributes to the generation of a proton gradient across the mitochondrial membrane that is then used for ATP synthesis. This is Cytochrome b (cob) from Talaromyces marneffei (Penicillium marneffei).